The chain runs to 335 residues: Lipase chaperone (335 aa).

The helical transmembrane segment at 1-21 threads the bilayer; it reads MSGSILLLPLAIALGLGFFIA.

This sequence belongs to the lipase chaperone family.

The protein localises to the cell inner membrane. Functionally, may be involved in the folding of the extracellular lipase during its passage through the periplasm. The chain is Lipase chaperone from Stutzerimonas stutzeri (strain A1501) (Pseudomonas stutzeri).